We begin with the raw amino-acid sequence, 260 residues long: DNA repair protein RecO (260 aa).

This sequence belongs to the RecO family.

In terms of biological role, involved in DNA repair and RecF pathway recombination. This chain is DNA repair protein RecO, found in Streptococcus gordonii (strain Challis / ATCC 35105 / BCRC 15272 / CH1 / DL1 / V288).